The primary structure comprises 1173 residues: Tectonin beta-propeller repeat-containing protein 1 (1173 aa).

4 TECPR repeats span residues 210–239 (SVWA…WSLI), 254–285 (DLLW…STVE), 301–332 (DVVW…IEMV), and 344–376 (NQVW…KAIV). Positions 413–430 (GDADTSSDTELSSIPTNL) are enriched in polar residues. The interval 413–495 (GDADTSSDTE…STNPTPSTEL (83 aa)) is disordered. A compositionally biased stretch (low complexity) spans 431-456 (SSTPPMGAAASSASSTGSQAAGAPAS). Residues 475 to 485 (SDEKAHLESRK) show a composition bias toward basic and acidic residues. The segment covering 486–495 (STNPTPSTEL) has biased composition (polar residues). The PH domain maps to 618–727 (VWVKTGMLQW…WLSLLTMSCC (110 aa)). 5 TECPR repeats span residues 739 to 766 (HAIW…PHPM), 962 to 991 (ALWA…WLHV), 1007 to 1037 (QVWA…YHIP), 1053 to 1083 (SVFV…DHVS), and 1095 to 1135 (DQVW…DYGI). The interval 1147 to 1173 (NASQAPRGTVPSESPPEPMESEGRVMC) is disordered.

It belongs to the TECPR1 family.

The protein localises to the cytoplasmic vesicle. Its subcellular location is the autophagosome membrane. It is found in the lysosome membrane. In terms of biological role, tethering factor involved in autophagy. Involved in autophagosome maturation by promoting the autophagosome fusion with lysosomes. Binds phosphatidylinositol-3-phosphate (PtdIns(3)P) present at the surface of autophagosomes. This is Tectonin beta-propeller repeat-containing protein 1 (TECPR1) from Gallus gallus (Chicken).